Consider the following 530-residue polypeptide: Glucose-6-phosphate isomerase (530 aa).

Glutamate 347 acts as the Proton donor in catalysis. Catalysis depends on residues histidine 378 and lysine 493.

Belongs to the GPI family.

Its subcellular location is the cytoplasm. The enzyme catalyses alpha-D-glucose 6-phosphate = beta-D-fructose 6-phosphate. The protein operates within carbohydrate biosynthesis; gluconeogenesis. It functions in the pathway carbohydrate degradation; glycolysis; D-glyceraldehyde 3-phosphate and glycerone phosphate from D-glucose: step 2/4. In terms of biological role, catalyzes the reversible isomerization of glucose-6-phosphate to fructose-6-phosphate. This is Glucose-6-phosphate isomerase from Chlamydia abortus (strain DSM 27085 / S26/3) (Chlamydophila abortus).